The primary structure comprises 403 residues: NADH-quinone oxidoreductase subunit D (403 aa).

It belongs to the complex I 49 kDa subunit family. In terms of assembly, NDH-1 is composed of 14 different subunits. Subunits NuoB, C, D, E, F, and G constitute the peripheral sector of the complex.

Its subcellular location is the cell inner membrane. The catalysed reaction is a quinone + NADH + 5 H(+)(in) = a quinol + NAD(+) + 4 H(+)(out). NDH-1 shuttles electrons from NADH, via FMN and iron-sulfur (Fe-S) centers, to quinones in the respiratory chain. The immediate electron acceptor for the enzyme in this species is believed to be ubiquinone. Couples the redox reaction to proton translocation (for every two electrons transferred, four hydrogen ions are translocated across the cytoplasmic membrane), and thus conserves the redox energy in a proton gradient. This is NADH-quinone oxidoreductase subunit D from Ruegeria sp. (strain TM1040) (Silicibacter sp.).